Consider the following 105-residue polypeptide: Large ribosomal subunit protein bL21 (105 aa).

Belongs to the bacterial ribosomal protein bL21 family. As to quaternary structure, part of the 50S ribosomal subunit. Contacts protein L20.

In terms of biological role, this protein binds to 23S rRNA in the presence of protein L20. This chain is Large ribosomal subunit protein bL21, found in Bacteroides fragilis (strain YCH46).